Here is a 404-residue protein sequence, read N- to C-terminus: Probable protein phosphatase 2C 30 (404 aa).

Basic and acidic residues predominate over residues 42–52 (AERGAEEETSG). Positions 42–72 (AERGAEEETSGKRRRLDGGGGEASTDEEDRE) are disordered. The PPM-type phosphatase domain maps to 77-399 (RYGFTSVCGR…DNVSVVVVNL (323 aa)). Aspartate 111, glycine 112, and aspartate 298 together coordinate Mn(2+). The disordered stretch occupies residues 321–369 (GRRERNRSSPTSNLSPRQSSSSGDEAPNDGAPSAAAGSESDEESAAEED). Residues 330–343 (PTSNLSPRQSSSSG) show a composition bias toward polar residues. Aspartate 390 serves as a coordination point for Mn(2+).

This sequence belongs to the PP2C family. As to quaternary structure, interacts with PYL5 and SAPK2. Binding to PYL5 is dependent on the presence of abscisic acid (ABA). Interacts with PYL3, PYL5 and PYL9. Binding to PYL5 and PYL9 is dependent on the presence of ABA. It depends on Mg(2+) as a cofactor. The cofactor is Mn(2+).

It is found in the nucleus. The enzyme catalyses O-phospho-L-seryl-[protein] + H2O = L-seryl-[protein] + phosphate. The catalysed reaction is O-phospho-L-threonyl-[protein] + H2O = L-threonyl-[protein] + phosphate. Together with ABI5, PYL5 and SAPK2, is part of an abscisic acid (ABA) signaling unit that modulates seed germination and early seedling growth. In Oryza sativa subsp. japonica (Rice), this protein is Probable protein phosphatase 2C 30.